Reading from the N-terminus, the 364-residue chain is Tyrosine--tRNA ligase (364 aa).

L-tyrosine is bound by residues Tyr-41, Tyr-167, Gln-171, Asp-174, and Gln-189. The 'KMSKS' region signature appears at 238–242; it reads KMSKS. An ATP-binding site is contributed by Lys-241.

This sequence belongs to the class-I aminoacyl-tRNA synthetase family. TyrS type 4 subfamily. As to quaternary structure, homodimer.

Its subcellular location is the cytoplasm. The enzyme catalyses tRNA(Tyr) + L-tyrosine + ATP = L-tyrosyl-tRNA(Tyr) + AMP + diphosphate + H(+). Functionally, catalyzes the attachment of tyrosine to tRNA(Tyr) in a two-step reaction: tyrosine is first activated by ATP to form Tyr-AMP and then transferred to the acceptor end of tRNA(Tyr). This chain is Tyrosine--tRNA ligase, found in Sulfurisphaera tokodaii (strain DSM 16993 / JCM 10545 / NBRC 100140 / 7) (Sulfolobus tokodaii).